A 581-amino-acid polypeptide reads, in one-letter code: Arginine--tRNA ligase (581 aa).

The short motif at 126-136 (PNLAKEMHVGH) is the 'HIGH' region element.

The protein belongs to the class-I aminoacyl-tRNA synthetase family. Monomer.

Its subcellular location is the cytoplasm. The catalysed reaction is tRNA(Arg) + L-arginine + ATP = L-arginyl-tRNA(Arg) + AMP + diphosphate. The sequence is that of Arginine--tRNA ligase from Shewanella oneidensis (strain ATCC 700550 / JCM 31522 / CIP 106686 / LMG 19005 / NCIMB 14063 / MR-1).